Reading from the N-terminus, the 74-residue chain is Cyclin-dependent kinases regulatory subunit (74 aa).

This sequence belongs to the CKS family. In terms of assembly, forms a homohexamer that can probably bind six kinase subunits.

Its function is as follows. Binds to the catalytic subunit of the cyclin dependent kinases Cdk1 and Cdk2, and is essential for their biological function. The sequence is that of Cyclin-dependent kinases regulatory subunit (Cks30A) from Drosophila melanogaster (Fruit fly).